Here is a 431-residue protein sequence, read N- to C-terminus: Serine--tRNA ligase (431 aa).

T237–E239 is a binding site for L-serine. R268–E270 contacts ATP. E291 is an L-serine binding site. E355–S358 is an ATP binding site. S390 contacts L-serine.

Belongs to the class-II aminoacyl-tRNA synthetase family. Type-1 seryl-tRNA synthetase subfamily. In terms of assembly, homodimer. The tRNA molecule binds across the dimer.

It is found in the cytoplasm. The enzyme catalyses tRNA(Ser) + L-serine + ATP = L-seryl-tRNA(Ser) + AMP + diphosphate + H(+). The catalysed reaction is tRNA(Sec) + L-serine + ATP = L-seryl-tRNA(Sec) + AMP + diphosphate + H(+). It participates in aminoacyl-tRNA biosynthesis; selenocysteinyl-tRNA(Sec) biosynthesis; L-seryl-tRNA(Sec) from L-serine and tRNA(Sec): step 1/1. Its function is as follows. Catalyzes the attachment of serine to tRNA(Ser). Is also able to aminoacylate tRNA(Sec) with serine, to form the misacylated tRNA L-seryl-tRNA(Sec), which will be further converted into selenocysteinyl-tRNA(Sec). This chain is Serine--tRNA ligase, found in Neisseria meningitidis serogroup A / serotype 4A (strain DSM 15465 / Z2491).